The chain runs to 1783 residues: MANGRMSMYSVASEGLGGPRAGQQPSQFSTTTLLNAIHNIYLSSQPFKLDAGTSLVVNTWLTASQTGPDGRTGGTIDAALGARAWEHARRRAEDGCIVLGSLHTSCPSLLTPFLSSLPLSLPSSLYKSLEAIQPFLRCSTPYNPSTPRQIALGVTLTLNLTGSLRGAAIALSQGGIDSTKGLLNIPVEAGYRAFDVFYYLLTSASTPAEREFLGLKSASSYALLAKSGTYEPPSYLPTADDAAAADDFRSALKDIGIKGSAHRNLISTLAGLLKLGDTLDYNLDEDVFDEICEDVSGLLGMDPETLATQCTTEDRATLVGGLYEALVDWVISKANEAISAQMVRIRDGTESIGGGGARTPTSNGEDDTVCITILDIPDPTLGKALAMRGVFDDTLGINSEMIADGVEVSAAGSTVVREMQAAIGEVGHELGIMTSATGRDRQHALEKREEVLEKIGHSADEDAFLKKLLFPITGQGIDLGRAGRLDLSSLLSSSRVWYHLSIHPTDDSPASLAALPSINSAWSAGTVSRQLRSWRLPEWANRRNKNLDFTADFDIDEFVQRYALLGCKDGREGIETWILERGWTNGEVVVGKERVWVRESAWWEAESMLDMKPLDSNLPGMGNVMAVNNLESGYSANGSGYFPTPMLDTTPNGSRDHLIAHQRNFSQGNLSQHTLAHNAAMRAPSVAPSGMRNVQAGDYGLGTKGDTFKGQVFYNNEGEFVGQMDPEIADGKHVEEKTMDKDRRIWVAIVWFWTFWIPSPLLSFVGRMKRPDVRMAWREKLTLVWFIVLINAAIVFWIVAFGKILCPNFDKAWNAKEVAYHTGENDFYVSFRGGVYDISKFWKIQHSDTAIETTKENMMPFAGLNMDDYFPPPLPLVCPGLGIAPTTTLQYNNTPEYVIGIHKSGILADDRTSALGATDWYSTKLLPKMREFYKGDLVWDKAFINSDGQNNDHMWVIYNGGVYDLTNYFKTLKVFQRVDSVNFLNADIVSAIESNPGEDVTDSWDEIVKTAANNATENASVQNSLNCIKNLFYVGIPDFRYSARCQTNNYIMLAMTIILCSVILVKFLAALQFGSKRRPAPQDKFVICQVPAYTEGEDSLRKALDSLTALQYDNKRKLICVICDGIIVGAGNDRPTPKIVLDILGVDPKVDPPALPFKSVGTGSEQLNYGKVYSGLYEFEGNVVPYLVVVKCGKESEQTKSKPGNRGKRDSQILLMSFLNRVHHRAPMSPLELEMFHQINNIIGVDPELYEYLMMVDADTCVREDSLNRLVSACANDAKIAGICGETGLQNDDKSWWTMIQVYEYFISHNLAKAFESLFGSVTCLPGCFTMYRLRTVDKGKPLIIADGVIRDYAVCDVDTLHKKNLLSLGEDRYLTTLMTKYFPSMKYKFIPDAYCQTAAPESWSVLLSQRRRWINSTIHNLFELMKLKEMCGFCCFSMRFVVFIDLFGTIILPATTIYLGYMIYLAASSTGQFPIISIIMLAAVYGLQALIFILKRQWQHIGWMIIYIMAFPIYSFALPIYSFWNQDNFSWGNTRIVIGEKGNKQLVAVDDEGFDPRSIPLQRWDDYAMANNLPGRRGGYMEKADMGYDDQYEMDEIRSVYSSVRQGSVLTGMNRNNTYMPPQSPAPFGHMVRASGAASPYHHDQAMANRQSMASLGTHDINRGQTPFQDFPSSRPSVSNLRGQANPSPGLGANRSQSALGLNRPHAAAQSTSSFDFQRGNMQGPDDSMIIEAIQGVLREVDLDTVTKKQVRALVEQRLQTGLVGERRTFMDRQIDNELANM.

Residues Asn-159, Asn-637, Asn-652, Asn-664, and Asn-669 are each glycosylated (N-linked (GlcNAc...) asparagine). A run of 2 helical transmembrane segments spans residues 745 to 765 (IWVA…LSFV) and 781 to 801 (LTLV…IVAF). N-linked (GlcNAc...) asparagine glycosylation is found at Asn-1014 and Asn-1018. A helical membrane pass occupies residues 1051–1071 (IMLAMTIILCSVILVKFLAAL). N-linked (GlcNAc...) asparagine glycosylation is present at Asn-1416. 3 helical membrane passes run 1441-1461 (FVVF…IYLG), 1474-1494 (FPII…LIFI), and 1502-1522 (IGWM…LPIY). Asn-1529 and Asn-1617 each carry an N-linked (GlcNAc...) asparagine glycan. The disordered stretch occupies residues 1659–1724 (THDINRGQTP…SFDFQRGNMQ (66 aa)). Residues 1664–1688 (RGQTPFQDFPSSRPSVSNLRGQANP) show a composition bias toward polar residues. Asn-1695 carries N-linked (GlcNAc...) asparagine glycosylation. The DEK-C domain maps to 1725-1781 (GPDDSMIIEAIQGVLREVDLDTVTKKQVRALVEQRLQTGLVGERRTFMDRQIDNELA).

This sequence belongs to the chitin synthase family. Class V subfamily.

The protein localises to the cell membrane. The catalysed reaction is [(1-&gt;4)-N-acetyl-beta-D-glucosaminyl](n) + UDP-N-acetyl-alpha-D-glucosamine = [(1-&gt;4)-N-acetyl-beta-D-glucosaminyl](n+1) + UDP + H(+). In terms of biological role, polymerizes chitin, a structural polymer of the cell wall and septum, by transferring the sugar moiety of UDP-GlcNAc to the non-reducing end of the growing chitin polymer. Responsible for about 29% of the chitin in conidial walls, is essential for conidial wall strength in media with high water potential and contributes to strength of hyphal tips. In Colletotrichum graminicola (Maize anthracnose fungus), this protein is Chitin synthase A.